A 625-amino-acid chain; its full sequence is Glutamine--fructose-6-phosphate aminotransferase [isomerizing] (625 aa).

The active-site Nucleophile; for GATase activity is the Cys-2. Positions 2–229 constitute a Glutamine amidotransferase type-2 domain; it reads CGIVGFVGRT…NDQIVTITAD (228 aa). 2 SIS domains span residues 296-436 and 470-615; these read IDES…LRGN and LAQD…VDQP. Lys-620 functions as the For Fru-6P isomerization activity in the catalytic mechanism.

In terms of assembly, homodimer.

Its subcellular location is the cytoplasm. It catalyses the reaction D-fructose 6-phosphate + L-glutamine = D-glucosamine 6-phosphate + L-glutamate. Its function is as follows. Catalyzes the first step in hexosamine metabolism, converting fructose-6P into glucosamine-6P using glutamine as a nitrogen source. This Corynebacterium diphtheriae (strain ATCC 700971 / NCTC 13129 / Biotype gravis) protein is Glutamine--fructose-6-phosphate aminotransferase [isomerizing].